Here is a 210-residue protein sequence, read N- to C-terminus: Probable GTP-binding protein EngB (210 aa).

In terms of domain architecture, EngB-type G spans 25-199 (TGIEVAFAGR…RQKLDTWFSE (175 aa)). Residues 33–40 (GRSNAGKS), 60–64 (GRTQL), 78–81 (DLPG), 145–148 (TKAD), and 178–180 (FSS) contribute to the GTP site. Mg(2+) is bound by residues serine 40 and threonine 62.

It belongs to the TRAFAC class TrmE-Era-EngA-EngB-Septin-like GTPase superfamily. EngB GTPase family. The cofactor is Mg(2+).

Its function is as follows. Necessary for normal cell division and for the maintenance of normal septation. This Shigella boydii serotype 4 (strain Sb227) protein is Probable GTP-binding protein EngB.